The sequence spans 100 residues: Urease subunit gamma (100 aa).

Belongs to the urease gamma subunit family. Heterotrimer of UreA (gamma), UreB (beta) and UreC (alpha) subunits. Three heterotrimers associate to form the active enzyme.

The protein resides in the cytoplasm. It catalyses the reaction urea + 2 H2O + H(+) = hydrogencarbonate + 2 NH4(+). The protein operates within nitrogen metabolism; urea degradation; CO(2) and NH(3) from urea (urease route): step 1/1. This chain is Urease subunit gamma, found in Rhodopseudomonas palustris (strain ATCC BAA-98 / CGA009).